Reading from the N-terminus, the 100-residue chain is Urease subunit gamma (100 aa).

The protein belongs to the urease gamma subunit family. In terms of assembly, heterotrimer of UreA (gamma), UreB (beta) and UreC (alpha) subunits. Three heterotrimers associate to form the active enzyme. Post-translationally, although not discussed in the published references, Met-1 is represented in the submitted PDB entries as being modified by either a formyl, a carboxyl, or an acetyl group. The N-terminal is probably N-(dihydroxymethyl)methionine, the hydrated form of N-formylmethionine.

It localises to the cytoplasm. It catalyses the reaction urea + 2 H2O + H(+) = hydrogencarbonate + 2 NH4(+). Its pathway is nitrogen metabolism; urea degradation; CO(2) and NH(3) from urea (urease route): step 1/1. The protein is Urease subunit gamma of Sporosarcina pasteurii (Bacillus pasteurii).